A 139-amino-acid polypeptide reads, in one-letter code: Actin-depolymerizing factor 9 (139 aa).

The 133-residue stretch at 7 to 139 folds into the ADF-H domain; sequence GLAVNDECKF…SLDIIRARAH (133 aa).

Belongs to the actin-binding proteins ADF family.

Actin-depolymerizing protein. Severs actin filaments (F-actin) and binds to actin monomers. This chain is Actin-depolymerizing factor 9 (ADF9), found in Oryza sativa subsp. japonica (Rice).